Reading from the N-terminus, the 185-residue chain is Ribosome-recycling factor (185 aa).

It belongs to the RRF family.

The protein resides in the cytoplasm. Functionally, responsible for the release of ribosomes from messenger RNA at the termination of protein biosynthesis. May increase the efficiency of translation by recycling ribosomes from one round of translation to another. This is Ribosome-recycling factor from Kineococcus radiotolerans (strain ATCC BAA-149 / DSM 14245 / SRS30216).